The primary structure comprises 247 residues: uncharacterized protein (247 aa).

Residues Leu-19, Asp-38, Asp-63, and Val-64 each contribute to the NAD(+) site. Ser-142 is a binding site for substrate. NAD(+)-binding residues include Tyr-155, Lys-159, and Ser-190. The active-site Proton acceptor is the Tyr-155.

It belongs to the short-chain dehydrogenases/reductases (SDR) family.

This is an uncharacterized protein from Mycobacterium bovis (strain ATCC BAA-935 / AF2122/97).